Reading from the N-terminus, the 237-residue chain is Protein GrpE (237 aa).

A disordered region spans residues 1-65 (MTDSYKLPDN…DAREDDRDPT (65 aa)). A compositionally biased stretch (basic and acidic residues) spans 55 to 65 (VDAREDDRDPT).

The protein belongs to the GrpE family. Homodimer.

Its subcellular location is the cytoplasm. Its function is as follows. Participates actively in the response to hyperosmotic and heat shock by preventing the aggregation of stress-denatured proteins, in association with DnaK and GrpE. It is the nucleotide exchange factor for DnaK and may function as a thermosensor. Unfolded proteins bind initially to DnaJ; upon interaction with the DnaJ-bound protein, DnaK hydrolyzes its bound ATP, resulting in the formation of a stable complex. GrpE releases ADP from DnaK; ATP binding to DnaK triggers the release of the substrate protein, thus completing the reaction cycle. Several rounds of ATP-dependent interactions between DnaJ, DnaK and GrpE are required for fully efficient folding. The chain is Protein GrpE from Corynebacterium efficiens (strain DSM 44549 / YS-314 / AJ 12310 / JCM 11189 / NBRC 100395).